Here is a 385-residue protein sequence, read N- to C-terminus: Glutamate 5-kinase (385 aa).

K17 provides a ligand contact to ATP. Positions 64, 151, and 165 each coordinate substrate. 185–186 (SD) contributes to the ATP binding site. Residues 291-367 (SGTVRVDAGA…DQIENVLGYS (77 aa)) enclose the PUA domain.

It belongs to the glutamate 5-kinase family.

It localises to the cytoplasm. The catalysed reaction is L-glutamate + ATP = L-glutamyl 5-phosphate + ADP. Its pathway is amino-acid biosynthesis; L-proline biosynthesis; L-glutamate 5-semialdehyde from L-glutamate: step 1/2. Its function is as follows. Catalyzes the transfer of a phosphate group to glutamate to form L-glutamate 5-phosphate. In Methanosarcina mazei (strain ATCC BAA-159 / DSM 3647 / Goe1 / Go1 / JCM 11833 / OCM 88) (Methanosarcina frisia), this protein is Glutamate 5-kinase.